Consider the following 399-residue polypeptide: MLNRVKLEIKDPMDWNTMYQENEMYSGIHNMTNVLPSNSFLPNDVSTVTTSMPYMSNGLPGPVTSIQGNIGSLGSMPQGMVGSLAPPPSTAAYPLGYCQGESEFQRDPRTYRRNYSHAKPPYSYISLITMAIQQAPNKMMTLNEIYQWIIDLFPYYRQNQQRWQNSIRHSLSFNDCFVKVPRSPEKPGKGSYWTLHPESGNMFENGCYLRRQKRFKCERSKSGEGEKKVNKPGEETGGNLKENPVGYDDCSSSRSPQAAVNDGGRDSTGSSIHQACGSSPVGLSPTSEQAGTASQLMYPLGLSNDGYLGLVGEDVHLKHDPFSGRHPFSITQLMSSEQDQTYANKMEMCPTTDHLVHYSNYSSDYHNMASKNGLDMQTSSSTDNGYYANMYSRPILSSL.

A DNA-binding region (fork-head) is located at residues 119–213 (KPPYSYISLI…ENGCYLRRQK (95 aa)). The segment covering 219–234 (RSKSGEGEKKVNKPGE) has biased composition (basic and acidic residues). The tract at residues 219–290 (RSKSGEGEKK…VGLSPTSEQA (72 aa)) is disordered. The segment covering 267–277 (STGSSIHQACG) has biased composition (polar residues).

As to expression, during stages 8.5 to 10, expressed in the part of the dorsal mesoderm invaginating the dorsal blastopore lip (Spemann organizer), as a direct response to dorsal mesodermal induction. At stage 12 (mid-gastrulation), restricted to the dorsal midline in the deeper layers of mesodermal cells. Continuously present in the posterior portion of invaginated mesoderm and expressed within the notochord. Also present in the midline of the neural plate during gastrulation, but absent from the notoplate in exogastrula embryos. Expression in the notochord continues in neurula-stage embryos and at stage 20 in addition to the notochord, expression is seen in the pharyngeal endoderm.

The protein resides in the nucleus. Functionally, transcriptional repressor involved in embryonic nervous system development. Plays a role in the induction and patterning of the anterior-posterior neural axis. Involved in the establishment of floor plate differentiation from neural plate cells during gastrulation. Binds the anf1 promoter sequence to restrict expression of anf1 to the anterior of the neural plate, thereby patterning the forebrain. Can bind to the HNF-3-alpha DNA target sequence. Cooperates with t/bra in a dose-dependent manner to specify dorsal mesoderm formation, including notochord. Binds to DNA via the target sequence 5'-[GA]TAAA[TC]A-3', with 5'-GTAAATA-3' being the preferred binding site. The protein is Forkhead box protein A4-A (foxa4-a) of Xenopus laevis (African clawed frog).